The primary structure comprises 338 residues: Tagatose 1,6-diphosphate aldolase (338 aa).

It belongs to the aldolase LacD family.

It carries out the reaction D-tagatofuranose 1,6-bisphosphate = D-glyceraldehyde 3-phosphate + dihydroxyacetone phosphate. It participates in carbohydrate metabolism; D-tagatose 6-phosphate degradation; D-glyceraldehyde 3-phosphate and glycerone phosphate from D-tagatose 6-phosphate: step 2/2. The protein is Tagatose 1,6-diphosphate aldolase of Listeria monocytogenes serotype 4a (strain HCC23).